The following is a 269-amino-acid chain: Probable membrane transporter protein YfcA (269 aa).

Residues Met-1–Leu-7 are Periplasmic-facing. A helical membrane pass occupies residues Phe-8 to Ile-28. The Cytoplasmic segment spans residues Asp-29–Ser-30. A helical transmembrane segment spans residues Ile-31 to Ala-51. At Asn-52 to Lys-84 the chain is on the periplasmic side. Residues Leu-85–Gln-105 form a helical membrane-spanning segment. Residues Ala-106–Gln-111 lie on the Cytoplasmic side of the membrane. The helical transmembrane segment at Ile-112–Glu-132 threads the bilayer. At Glu-133–Asp-156 the chain is on the periplasmic side. A helical transmembrane segment spans residues Gly-157–Phe-177. Residues Asn-178–Gly-197 are Cytoplasmic-facing. A helical transmembrane segment spans residues Leu-198 to Gly-218. Residues Gln-219–Asn-269 are Periplasmic-facing.

Belongs to the 4-toluene sulfonate uptake permease (TSUP) (TC 2.A.102) family.

The protein localises to the cell inner membrane. In Escherichia coli O157:H7, this protein is Probable membrane transporter protein YfcA (yfcA).